A 297-amino-acid polypeptide reads, in one-letter code: Urease accessory protein UreD (297 aa).

The segment at 1 to 41 (MPQAADIATAPQRPSAPGDVVAAGQPPRARGRAHVSSKRRD) is disordered.

The protein belongs to the UreD family. As to quaternary structure, ureD, UreF and UreG form a complex that acts as a GTP-hydrolysis-dependent molecular chaperone, activating the urease apoprotein by helping to assemble the nickel containing metallocenter of UreC. The UreE protein probably delivers the nickel.

Its subcellular location is the cytoplasm. Required for maturation of urease via the functional incorporation of the urease nickel metallocenter. The chain is Urease accessory protein UreD from Ruegeria sp. (strain TM1040) (Silicibacter sp.).